A 582-amino-acid chain; its full sequence is Protein bps2 (582 aa).

An ATP-binding site is contributed by 28–35 (APNAYGKT). A coiled-coil region spans residues 243–281 (RQSYERQLQEINAQLQKITAQRNEAEIEIRLLEKVLDQI). The region spanning 243 to 351 (RQSYERQLQE…KLKELDQISS (109 aa)) is the Zinc-hook domain. Residues cysteine 292 and cysteine 295 each coordinate Zn(2+). A coiled-coil region spans residues 320–351 (SLYAGIKKEADELLSKKSEIEKKLKELDQISS).

The polypeptide is Protein bps2 (bps2) (Acidianus ambivalens (Desulfurolobus ambivalens)).